A 70-amino-acid chain; its full sequence is Putative defensin-like protein 73 (70 aa).

The first 29 residues, 1-29 (MNCKIEFMSFLVMTSIVILFLFVSGKVEA), serve as a signal peptide directing secretion. 4 disulfides stabilise this stretch: Cys-33–Cys-68, Cys-37–Cys-57, Cys-43–Cys-66, and Cys-47–Cys-67.

The protein belongs to the DEFL family.

The protein resides in the secreted. The polypeptide is Putative defensin-like protein 73 (LCR44) (Arabidopsis thaliana (Mouse-ear cress)).